A 467-amino-acid polypeptide reads, in one-letter code: Glutamate--tRNA ligase (467 aa).

The short motif at 10 to 20 is the 'HIGH' region element; the sequence is PSPTGHLHIGG. Positions 99, 101, 126, and 128 each coordinate Zn(2+). The short motif at 236–240 is the 'KMSKS' region element; sequence RLSKR. Residue Lys239 coordinates ATP.

Belongs to the class-I aminoacyl-tRNA synthetase family. Glutamate--tRNA ligase type 1 subfamily. Monomer. Zn(2+) is required as a cofactor.

The protein localises to the cytoplasm. The enzyme catalyses tRNA(Glu) + L-glutamate + ATP = L-glutamyl-tRNA(Glu) + AMP + diphosphate. In terms of biological role, catalyzes the attachment of glutamate to tRNA(Glu) in a two-step reaction: glutamate is first activated by ATP to form Glu-AMP and then transferred to the acceptor end of tRNA(Glu). The polypeptide is Glutamate--tRNA ligase (Desulfosudis oleivorans (strain DSM 6200 / JCM 39069 / Hxd3) (Desulfococcus oleovorans)).